Consider the following 170-residue polypeptide: Neurotensin/neuromedin N (170 aa).

A signal peptide spans 1 to 23 (MMAGMKIQLVCMLLLAFSSWSLC). Q151 is modified (pyrrolidone carboxylic acid).

It belongs to the neurotensin family. In terms of assembly, interacts with NTSR1. Interacts with SORT1. Interacts with SORL1. In terms of processing, neurotensin is cleaved and degraded by Angiotensin-converting enzyme (ACE) and neprilysin (MME).

The protein resides in the secreted. It localises to the cytoplasmic vesicle. The protein localises to the secretory vesicle. Neurotensin may play an endocrine or paracrine role in the regulation of fat metabolism. It causes contraction of smooth muscle. This Homo sapiens (Human) protein is Neurotensin/neuromedin N (NTS).